The sequence spans 370 residues: Putative agmatine deiminase (370 aa).

C361 functions as the Amidino-cysteine intermediate in the catalytic mechanism.

It belongs to the agmatine deiminase family.

The catalysed reaction is agmatine + H2O = N-carbamoylputrescine + NH4(+). The protein is Putative agmatine deiminase of Shewanella baltica (strain OS223).